The primary structure comprises 182 residues: Testis-expressed protein 29 (182 aa).

Over 1–56 (MRYTTDIKKSPPQLLKTFAVCDISLYDICDYNVTRDQCKELGCCFYKGVCYKKVVP) the chain is Extracellular. Residues 57 to 77 (IYVQMFSTLIVLVTGIIIITI) form a helical membrane-spanning segment. The Cytoplasmic portion of the chain corresponds to 78-182 (IYRIVQEIKR…PPTDPSENPP (105 aa)). Residues 91-182 (LSMNSTPKAS…PPTDPSENPP (92 aa)) form a disordered region. The segment covering 115-170 (RAPSRSPSRTSSTLSSRSPTTAPTTAPTTDPATDPATDPATDPATDPATDPATDPA) has biased composition (low complexity). Residues 171–182 (TAPPTDPSENPP) show a composition bias toward pro residues.

It localises to the membrane. This chain is Testis-expressed protein 29 (Tex29), found in Rattus norvegicus (Rat).